Consider the following 834-residue polypeptide: Glycerol-3-phosphate acyltransferase (834 aa).

An HXXXXD motif motif is present at residues 309 to 314 (CHRSHI).

Belongs to the GPAT/DAPAT family.

The protein localises to the cell inner membrane. The catalysed reaction is sn-glycerol 3-phosphate + an acyl-CoA = a 1-acyl-sn-glycero-3-phosphate + CoA. Its pathway is phospholipid metabolism; CDP-diacylglycerol biosynthesis; CDP-diacylglycerol from sn-glycerol 3-phosphate: step 1/3. The polypeptide is Glycerol-3-phosphate acyltransferase (Pseudomonas paraeruginosa (strain DSM 24068 / PA7) (Pseudomonas aeruginosa (strain PA7))).